The primary structure comprises 324 residues: MVTEPLTKPALVAVDMRPARRGERLFKLAASAAGSTIVIAILLIAIFLLVRAVPSLRANHANFFTSTQFDTSDDEQLAFGVRDLFMVTALSSITALVLAVPVAVGIAVFLTHYAPRRLSRPFGAMVDLLAAVPSIIFGLWGIFVLAPKLEPIARFLNRNLGWLFLFKQGNVSLAGGGTIFTAGIVLSVMILPIVTSISREVFRQTPLIQIEAALALGATKWEVVRMTVLPYGRSGVVAASMLGLGRALGETVAVLVILRSAARPGTWSLFDGGYTFASKIASAASEFSEPLPTGAYISAGFALFVLTFLVNAAARAIAGGKVNG.

6 consecutive transmembrane segments (helical) span residues 30–50, 90–110, 125–145, 174–194, 237–257, and 290–310; these read ASAA…FLLV, LSSI…AVFL, MVDL…IFVL, AGGG…LPIV, VAAS…VLVI, and PLPT…TFLV. One can recognise an ABC transmembrane type-1 domain in the interval 85–314; the sequence is FMVTALSSIT…VLTFLVNAAA (230 aa).

It belongs to the binding-protein-dependent transport system permease family. CysTW subfamily.

It localises to the cell membrane. Part of the binding-protein-dependent transport system for phosphate; probably responsible for the translocation of the substrate across the membrane. The polypeptide is Phosphate transport system permease protein PstC 2 (pstC2) (Mycobacterium bovis (strain ATCC BAA-935 / AF2122/97)).